Here is a 369-residue protein sequence, read N- to C-terminus: Protein DUF642 L-GALACTONO-1,4-LACTONE-RESPONSIVE GENE 2 (369 aa).

A signal peptide spans 1–19 (MEGVTVVSFFLLFIATAMA). A glycan (N-linked (GlcNAc...) asparagine) is linked at Asn-125.

Expressed in roots, seedlings and leaves.

The protein localises to the secreted. It is found in the cell wall. Involved in the regulation of testa rupture during seed germination. Required during roots and rosettes development. The protein is Protein DUF642 L-GALACTONO-1,4-LACTONE-RESPONSIVE GENE 2 of Arabidopsis thaliana (Mouse-ear cress).